The chain runs to 202 residues: Urease accessory protein UreE (202 aa).

The segment covering 171 to 188 has biased composition (basic and acidic residues); the sequence is HHGHSHSHDHDHDHDHQH. Residues 171-202 form a disordered region; sequence HHGHSHSHDHDHDHDHQHGPGCTHGHRGHDHH.

This sequence belongs to the UreE family.

Its subcellular location is the cytoplasm. Involved in urease metallocenter assembly. Binds nickel. Probably functions as a nickel donor during metallocenter assembly. This is Urease accessory protein UreE from Burkholderia ambifaria (strain ATCC BAA-244 / DSM 16087 / CCUG 44356 / LMG 19182 / AMMD) (Burkholderia cepacia (strain AMMD)).